Consider the following 941-residue polypeptide: Replicative DNA helicase DnaB (941 aa).

Positions 1-25 (MAEFEERPRLSIGEEEAPPYPLEKL) are disordered. An SF4 helicase; first part domain is found at 214 to 484 (RPGGITGVPS…PVYRLTTRLG (271 aa)). 245–252 (ARPSMGKT) lines the ATP pocket. The 150-residue stretch at 534-683 (LLGHLIGDGC…VQSLLLRLGI (150 aa)) folds into the DOD-type homing endonuclease domain. The 270-residue stretch at 646 to 915 (DGCIQMRRGK…ARFENLTMYQ (270 aa)) folds into the SF4 helicase; second part domain. The tract at residues 914–941 (YQPEPGTPLPETPDETILPSGPPDEAPF) is disordered.

Belongs to the helicase family. DnaB subfamily. In terms of assembly, homohexamer. In terms of processing, upon expression in E.coli this protein undergoes self splicing that involves a post-translational excision of the intervening region (intein) followed by peptide ligation.

It catalyses the reaction Couples ATP hydrolysis with the unwinding of duplex DNA at the replication fork by translocating in the 5'-3' direction. This creates two antiparallel DNA single strands (ssDNA). The leading ssDNA polymer is the template for DNA polymerase III holoenzyme which synthesizes a continuous strand.. It carries out the reaction ATP + H2O = ADP + phosphate + H(+). Functionally, the main replicative DNA helicase, it participates in initiation and elongation during chromosome replication. Travels ahead of the DNA replisome, separating dsDNA into templates for DNA synthesis. A processive ATP-dependent 5'-3' DNA helicase it has DNA-dependent ATPase activity. The intein is an endonuclease. The protein is Replicative DNA helicase DnaB of Rhodothermus marinus (Rhodothermus obamensis).